Here is a 30-residue protein sequence, read N- to C-terminus: Photosystem I reaction center subunit XII (30 aa).

The chain crosses the membrane as a helical span at residues 5–25 (SQIFFALCIALTAAVLAIGLG).

Belongs to the PsaM family.

The protein resides in the plastid. It is found in the chloroplast thylakoid membrane. This Emiliania huxleyi (Coccolithophore) protein is Photosystem I reaction center subunit XII.